The chain runs to 168 residues: Protein OPG162 (168 aa).

The Intravirion segment spans residues 1–14 (MKSLNRQTVSRFKK). Residues 15–37 (LSVPAAIMMILSTIISGIGTFLH) form a helical membrane-spanning segment. Residues 38–168 (YKEELMPSAC…SVLCVKKFYK (131 aa)) are Virion surface-facing. Residues 54–163 (YDKHCYLDTN…CKSTQSVLCV (110 aa)) enclose the C-type lectin domain. Disulfide bonds link Cys75–Cys162 and Cys141–Cys154. Asn133 carries N-linked (GlcNAc...) asparagine; by host glycosylation.

Belongs to the orthopoxvirus OPG162 protein family. In terms of assembly, interacts with protein OPG161. Interacts with protein OPG164. Interacts with protein OPG190.

The protein resides in the virion membrane. It localises to the host Golgi apparatus. In terms of biological role, forms a complex with OPG162 and OPG190 to coordinate the incorporation of OPG164 into wrapped enveloped virion (EV) membranes and, subsequently, the production of actin tails. Therefore plays an essential role in efficient cell-to-cell spread of viral particles. The chain is Protein OPG162 (OPG162) from Vaccinia virus (strain Western Reserve) (VACV).